A 408-amino-acid chain; its full sequence is Putative agmatinase 3 (408 aa).

A signal peptide spans 1–21; that stretch reads MKSVEWFTWGVFLLLSGFGEA. Histidine 198, aspartate 222, histidine 224, aspartate 226, aspartate 319, and aspartate 321 together coordinate Mn(2+).

Belongs to the arginase family. The cofactor is Mn(2+).

The enzyme catalyses agmatine + H2O = urea + putrescine. This is Putative agmatinase 3 from Schizosaccharomyces pombe (strain 972 / ATCC 24843) (Fission yeast).